Here is a 398-residue protein sequence, read N- to C-terminus: Cysteine protease ATG4A (398 aa).

The Nucleophile role is filled by cysteine 77. Catalysis depends on residues aspartate 279 and histidine 281. The short motif at 393 to 396 is the LIR element; that stretch reads FEIL.

It belongs to the peptidase C54 family. Interacts with ATG9A; the interaction is direct.

Its subcellular location is the cytoplasm. It catalyses the reaction [protein]-C-terminal L-amino acid-glycyl-phosphatidylethanolamide + H2O = [protein]-C-terminal L-amino acid-glycine + a 1,2-diacyl-sn-glycero-3-phosphoethanolamine. Its activity is regulated as follows. Inhibited by N-ethylmaleimide. Redox-regulated during autophagy since reducing conditions activate ATG4A whereas an oxidizing environment such as the presence of H(2)O(2) inhibits its activity. Cysteine protease that plays a key role in autophagy by mediating both proteolytic activation and delipidation of ATG8 family proteins. The protease activity is required for proteolytic activation of ATG8 family proteins: cleaves the C-terminal amino acid of ATG8 proteins to reveal a C-terminal glycine. Exposure of the glycine at the C-terminus is essential for ATG8 proteins conjugation to phosphatidylethanolamine (PE) and insertion to membranes, which is necessary for autophagy. Preferred substrate is GABARAPL2 followed by MAP1LC3A and GABARAP. Protease activity is also required to counteract formation of high-molecular weight conjugates of ATG8 proteins (ATG8ylation): acts as a deubiquitinating-like enzyme that removes ATG8 conjugated to other proteins, such as ATG3. In addition to the protease activity, also mediates delipidation of ATG8 family proteins. Catalyzes delipidation of PE-conjugated forms of ATG8 proteins during macroautophagy. Compared to ATG4B, the major protein for proteolytic activation of ATG8 proteins, shows weaker ability to cleave the C-terminal amino acid of ATG8 proteins, while it displays stronger delipidation activity. Involved in phagophore growth during mitophagy independently of its protease activity and of ATG8 proteins: acts by regulating ATG9A trafficking to mitochondria and promoting phagophore-endoplasmic reticulum contacts during the lipid transfer phase of mitophagy. The protein is Cysteine protease ATG4A of Homo sapiens (Human).